The primary structure comprises 288 residues: Phosphatidylserine decarboxylase proenzyme (288 aa).

Active-site charge relay system; for autoendoproteolytic cleavage activity residues include aspartate 91, histidine 148, and serine 254. Catalysis depends on serine 254, which acts as the Schiff-base intermediate with substrate; via pyruvic acid; for decarboxylase activity. Serine 254 carries the pyruvic acid (Ser); by autocatalysis modification.

This sequence belongs to the phosphatidylserine decarboxylase family. PSD-B subfamily. Prokaryotic type I sub-subfamily. Heterodimer of a large membrane-associated beta subunit and a small pyruvoyl-containing alpha subunit. The cofactor is pyruvate. Post-translationally, is synthesized initially as an inactive proenzyme. Formation of the active enzyme involves a self-maturation process in which the active site pyruvoyl group is generated from an internal serine residue via an autocatalytic post-translational modification. Two non-identical subunits are generated from the proenzyme in this reaction, and the pyruvate is formed at the N-terminus of the alpha chain, which is derived from the carboxyl end of the proenzyme. The autoendoproteolytic cleavage occurs by a canonical serine protease mechanism, in which the side chain hydroxyl group of the serine supplies its oxygen atom to form the C-terminus of the beta chain, while the remainder of the serine residue undergoes an oxidative deamination to produce ammonia and the pyruvoyl prosthetic group on the alpha chain. During this reaction, the Ser that is part of the protease active site of the proenzyme becomes the pyruvoyl prosthetic group, which constitutes an essential element of the active site of the mature decarboxylase.

It is found in the cell membrane. It catalyses the reaction a 1,2-diacyl-sn-glycero-3-phospho-L-serine + H(+) = a 1,2-diacyl-sn-glycero-3-phosphoethanolamine + CO2. It functions in the pathway phospholipid metabolism; phosphatidylethanolamine biosynthesis; phosphatidylethanolamine from CDP-diacylglycerol: step 2/2. In terms of biological role, catalyzes the formation of phosphatidylethanolamine (PtdEtn) from phosphatidylserine (PtdSer). This chain is Phosphatidylserine decarboxylase proenzyme, found in Pseudoalteromonas translucida (strain TAC 125).